We begin with the raw amino-acid sequence, 204 residues long: Thymidine kinase (204 aa).

ATP-binding positions include 23–30 (GSMFSGKT) and 95–98 (DEAQ). The active-site Proton acceptor is the Glu96. Residues Cys152, Cys155, Cys184, and Cys187 each contribute to the Zn(2+) site.

The protein belongs to the thymidine kinase family. As to quaternary structure, homotetramer.

The protein localises to the cytoplasm. The enzyme catalyses thymidine + ATP = dTMP + ADP + H(+). The chain is Thymidine kinase from Porphyromonas gingivalis (strain ATCC BAA-308 / W83).